An 859-amino-acid polypeptide reads, in one-letter code: Alanine--tRNA ligase (859 aa).

The Zn(2+) site is built by His562, His566, Cys664, and His668.

Belongs to the class-II aminoacyl-tRNA synthetase family. Zn(2+) serves as cofactor.

Its subcellular location is the cytoplasm. The catalysed reaction is tRNA(Ala) + L-alanine + ATP = L-alanyl-tRNA(Ala) + AMP + diphosphate. Catalyzes the attachment of alanine to tRNA(Ala) in a two-step reaction: alanine is first activated by ATP to form Ala-AMP and then transferred to the acceptor end of tRNA(Ala). Also edits incorrectly charged Ser-tRNA(Ala) and Gly-tRNA(Ala) via its editing domain. The polypeptide is Alanine--tRNA ligase (Aliivibrio fischeri (strain ATCC 700601 / ES114) (Vibrio fischeri)).